A 436-amino-acid polypeptide reads, in one-letter code: Glutamate-1-semialdehyde 2,1-aminomutase 2 (436 aa).

Position 271 is an N6-(pyridoxal phosphate)lysine (Lys-271).

The protein belongs to the class-III pyridoxal-phosphate-dependent aminotransferase family. HemL subfamily. Homodimer. Pyridoxal 5'-phosphate serves as cofactor.

The protein resides in the cytoplasm. The catalysed reaction is (S)-4-amino-5-oxopentanoate = 5-aminolevulinate. It functions in the pathway porphyrin-containing compound metabolism; protoporphyrin-IX biosynthesis; 5-aminolevulinate from L-glutamyl-tRNA(Glu): step 2/2. This chain is Glutamate-1-semialdehyde 2,1-aminomutase 2, found in Exiguobacterium sibiricum (strain DSM 17290 / CCUG 55495 / CIP 109462 / JCM 13490 / 255-15).